A 139-amino-acid polypeptide reads, in one-letter code: uncharacterized protein (139 aa).

This is an uncharacterized protein from Caenorhabditis elegans.